A 389-amino-acid chain; its full sequence is Terminal nucleotidyltransferase 5D (389 aa).

Belongs to the TENT family. As to expression, restricted to testis.

It catalyses the reaction RNA(n) + ATP = RNA(n)-3'-adenine ribonucleotide + diphosphate. Catalyzes the transfer of one adenosine molecule from an ATP to an mRNA poly(A) tail bearing a 3'-OH terminal group. This Homo sapiens (Human) protein is Terminal nucleotidyltransferase 5D.